Here is an 83-residue protein sequence, read N- to C-terminus: Small ribosomal subunit protein uS17 (83 aa).

This sequence belongs to the universal ribosomal protein uS17 family. In terms of assembly, part of the 30S ribosomal subunit.

One of the primary rRNA binding proteins, it binds specifically to the 5'-end of 16S ribosomal RNA. In Ehrlichia canis (strain Jake), this protein is Small ribosomal subunit protein uS17.